The sequence spans 430 residues: Peptidoglycan DD-endopeptidase ShyA (430 aa).

Positions 1–35 (MISKSIILRFSELSMRKKATLVGLPLLAVAAISSS) are cleaved as a signal peptide. Positions 297, 301, and 378 each coordinate Zn(2+).

It belongs to the peptidase M23B family. It depends on Zn(2+) as a cofactor.

The protein resides in the periplasm. It participates in cell wall degradation; peptidoglycan degradation. Reduced activity in 0.5 mM EDTA and a complete loss of activity at higher EDTA concentrations. The effect of EDTA can be reversed by addition of 1 mM ZnCl(2). Conformational switching between open (catalytically active) and closed (catalytically inactive) conformation of this protein is suggested mechanism of its regulation. The signal or inducer of the conformational shift to the open form unmasking the active site is currently not understood. In terms of biological role, cell wall peptidoglycan (PG) DD-endopeptidase essential for cell growth and elongation. Hydrolyzes peptide cross-links which covalently connect adjacent PG strands probably to allow insertion of new glycans and thus cell wall expansion. Degrades purified whole PG sacculi in vitro. Releases predominantly short glycan chains from the PG. Cleaves D,D cross-linked muropeptides specifically preferring dimeric tetrapeptide-tetrapeptide (D44) substrates and has only little activity on dimeric tetrapeptide-pentapeptide (D45) substrates. Also converts more than 50% of tetrapeptide-tripeptide (D43) to product as well as more than 50% of D43M, which contains D-Met instead of D-Ala in the fourth position of the acceptor moiety. Cleaves the D,D bond between diaminopimelic acid (DAP) and D-Ala of the PG substrate in vitro. No cleavage of L,D bond connecting two DAP moieties. The protein is Peptidoglycan DD-endopeptidase ShyA of Vibrio cholerae serotype O1 (strain ATCC 39315 / El Tor Inaba N16961).